Consider the following 467-residue polypeptide: 3-isopropylmalate dehydratase large subunit (467 aa).

Positions 347, 407, and 410 each coordinate [4Fe-4S] cluster.

Belongs to the aconitase/IPM isomerase family. LeuC type 1 subfamily. As to quaternary structure, heterodimer of LeuC and LeuD. It depends on [4Fe-4S] cluster as a cofactor.

The enzyme catalyses (2R,3S)-3-isopropylmalate = (2S)-2-isopropylmalate. It functions in the pathway amino-acid biosynthesis; L-leucine biosynthesis; L-leucine from 3-methyl-2-oxobutanoate: step 2/4. Functionally, catalyzes the isomerization between 2-isopropylmalate and 3-isopropylmalate, via the formation of 2-isopropylmaleate. The chain is 3-isopropylmalate dehydratase large subunit from Synechococcus sp. (strain JA-2-3B'a(2-13)) (Cyanobacteria bacterium Yellowstone B-Prime).